We begin with the raw amino-acid sequence, 196 residues long: Thymidylate kinase (196 aa).

7 to 14 (GIDGSGKT) contacts ATP.

The protein belongs to the thymidylate kinase family.

The enzyme catalyses dTMP + ATP = dTDP + ADP. Phosphorylation of dTMP to form dTDP in both de novo and salvage pathways of dTTP synthesis. In Wolbachia pipientis wMel, this protein is Thymidylate kinase.